The following is a 148-amino-acid chain: Deoxyuridine 5'-triphosphate nucleotidohydrolase (148 aa).

Residues 67–69 (RSG), Asn-80, 84–86 (LID), and Met-94 contribute to the substrate site.

This sequence belongs to the dUTPase family. Mg(2+) serves as cofactor.

The catalysed reaction is dUTP + H2O = dUMP + diphosphate + H(+). It participates in pyrimidine metabolism; dUMP biosynthesis; dUMP from dCTP (dUTP route): step 2/2. This enzyme is involved in nucleotide metabolism: it produces dUMP, the immediate precursor of thymidine nucleotides and it decreases the intracellular concentration of dUTP so that uracil cannot be incorporated into DNA. This is Deoxyuridine 5'-triphosphate nucleotidohydrolase from Burkholderia lata (strain ATCC 17760 / DSM 23089 / LMG 22485 / NCIMB 9086 / R18194 / 383).